The chain runs to 992 residues: Epstein-Barr nuclear antigen 6 (992 aa).

Residues 1–70 (MESFEGQGDS…SRGDENRGWM (70 aa)) are disordered. Over residues 12–31 (QSPDNERGDNVQTTGEHDQD) the composition is skewed to basic and acidic residues. The interval 130 to 159 (LILDSGLDTQHILCFVMAARQRLQDIRRGP) is interaction with host PIM1. Disordered stretches follow at residues 355-905 (ATGG…DSMA), 931-954 (PLDI…PARC), and 967-992 (DNSE…SELD). Positions 381–391 (VELESSDDELP) are enriched in acidic residues. Residues 445-461 (AQSTPERPGPSEQSSVT) show a composition bias toward polar residues. Over residues 479 to 495 (QPPPVPKPVPVKPTPPP) the composition is skewed to pro residues. Positions 506–520 (YDDDVIEVIDVETTE) are enriched in acidic residues. A 1-1; approximate repeat occupies 551–555 (PPTVS). The tract at residues 551–610 (PPTVSPSDTGPPAVGPPAAGPPAAGPPAAGPPAAGPPAAGPPAAGPRILAPLSAGPPAAG) is 12 X 5 AA approximate tandem repeats of P-P-A-A-G. One copy of the 2-1; approximate repeat lies at 556-560 (PSDTG). One copy of the 3-1; approximate repeat lies at 561-565 (PPAVG). Residues 563–594 (AVGPPAAGPPAAGPPAAGPPAAGPPAAGPPAA) are compositionally biased toward pro residues. 6 tandem repeats follow at residues 566–570 (PPAAG), 571–575 (PPAAG), 576–580 (PPAAG), 581–585 (PPAAG), 586–590 (PPAAG), and 591–595 (PPAAG). Over residues 595–611 (GPRILAPLSAGPPAAGP) the composition is skewed to low complexity. The stretch at 596-600 (PRILA) is one 10-1; approximate repeat. Residues 601–605 (PLSAG) form an 11-1; approximate repeat. One copy of the 12-1 repeat lies at 606–610 (PPAAG). Composition is skewed to polar residues over residues 659 to 676 (TQMQ…TQPT) and 700 to 714 (IESS…TQPI). Positions 715-724 (SHEEQPRYED) are enriched in basic and acidic residues. 2 stretches are compositionally biased toward low complexity: residues 738-764 (AAQP…QGYQ) and 772-781 (PYQGYQEPPA). 3 consecutive repeat copies span residues 741–753 (PAPQ…YQEP), 754–766 (PAPQ…YQEP), and 767–779 (PPPQ…YQEP). The tract at residues 741-779 (PAPQAPYQGYQEPPAPQAPYQGYQEPPPPQAPYQGYQEP) is 3 X 13 AA tandem repeats of P-[AP]-P-Q-A-P-Y-Q-G-Y-Q-E-P. Residues 845 to 857 (DQVSQFPHLQSET) are compositionally biased toward polar residues. Low complexity predominate over residues 859 to 881 (PPRLQLSLVPLVSSSAPSWSSPQ). The segment covering 882–899 (PRAPIRPIPTRFPPPPMP) has biased composition (pro residues).

It belongs to the herpesviridae EBNA-6 family. Interacts with host CTPB1; this interaction leads to gene repression, but also seems to interfere with the repressive function of CtBP pre-bound to DNA, leading to EBNA6 mediated up-regulation of many host genes. Interacts with host MYC; this interaction enhances MYC stability. Interacts (via N-terminus) with host RBPJ. Interacts (via N-terminus) with host histone H2AX; this interaction facilitates H2AX proteasomal degradation. Interacts with host TP73; this interaction inhibits TP73-mediated apoptotic pathway. Interacts (via N-terminus) with host PIM1; this interaction upregulates and stabilizes PIM1 and induces cell proliferation by inhibiting the growth suppressive properties of p21.

The protein localises to the host nucleus. The protein resides in the host nucleus matrix. Functionally, plays an essential role for the activation and immortalization of human B-cells. Represses transcription of viral promoters TP1 and Cp through interaction with host RBPJ, and inhibits EBNA2-mediated activation of these promoters. Targets host chromatin through interactions with host transcription factors, especially RBPJ and IRF4. Alternatively, EBNA6 also regulates the transcription of the EBV oncogene LMP1 in a cell cycle-dependent manner. Modulates the activity of several host proteins involved in cell cycle regulation including host cyclin A, MYC, RB, p21 and p27 mainly through binding to the host SCF(SKP2) complex. Inhibits the promoter of host H2AX and targets H2AX to proteasomal degradation in order to promote latency and cell proliferation. Upregulates host PIM1 expression and stabilization. Potentiates PIM1 to promote cell proliferation by inhibiting the growth suppressive properties of p21. The protein is Epstein-Barr nuclear antigen 6 (EBNA6) of Epstein-Barr virus (strain B95-8) (HHV-4).